Consider the following 305-residue polypeptide: Probable lipid kinase YegS-like (305 aa).

One can recognise a DAGKc domain in the interval 1-129 (MTQRRAMLIL…VDLGEVGGKL (129 aa)). Residues Thr-39, 65 to 71 (GDGTLRD), and Thr-92 each bind ATP. Positions 210, 213, and 215 each coordinate Mg(2+). The Proton acceptor role is filled by Glu-268.

This sequence belongs to the diacylglycerol/lipid kinase family. YegS lipid kinase subfamily. The cofactor is Mg(2+). Ca(2+) serves as cofactor.

The protein resides in the cytoplasm. Probably phosphorylates lipids; the in vivo substrate is unknown. This chain is Probable lipid kinase YegS-like, found in Pseudomonas syringae pv. syringae (strain B728a).